The sequence spans 227 residues: Uracil-DNA glycosylase (227 aa).

Residue D68 is the Proton acceptor of the active site.

It belongs to the uracil-DNA glycosylase (UDG) superfamily. UNG family.

The protein localises to the cytoplasm. The enzyme catalyses Hydrolyzes single-stranded DNA or mismatched double-stranded DNA and polynucleotides, releasing free uracil.. Functionally, excises uracil residues from the DNA which can arise as a result of misincorporation of dUMP residues by DNA polymerase or due to deamination of cytosine. The protein is Uracil-DNA glycosylase of Mycolicibacterium smegmatis (strain ATCC 700084 / mc(2)155) (Mycobacterium smegmatis).